Here is a 275-residue protein sequence, read N- to C-terminus: Light-independent protochlorophyllide reductase iron-sulfur ATP-binding protein (275 aa).

Residues 12 to 17 (GIGKST) and lysine 41 contribute to the ATP site. Serine 16 provides a ligand contact to Mg(2+). Residues cysteine 97 and cysteine 131 each contribute to the [4Fe-4S] cluster site. 182–183 (NR) lines the ATP pocket.

Belongs to the NifH/BchL/ChlL family. In terms of assembly, homodimer. Protochlorophyllide reductase is composed of three subunits; BchL, BchN and BchB. [4Fe-4S] cluster serves as cofactor.

It catalyses the reaction chlorophyllide a + oxidized 2[4Fe-4S]-[ferredoxin] + 2 ADP + 2 phosphate = protochlorophyllide a + reduced 2[4Fe-4S]-[ferredoxin] + 2 ATP + 2 H2O. It participates in porphyrin-containing compound metabolism; bacteriochlorophyll biosynthesis (light-independent). Component of the dark-operative protochlorophyllide reductase (DPOR) that uses Mg-ATP and reduced ferredoxin to reduce ring D of protochlorophyllide (Pchlide) to form chlorophyllide a (Chlide). This reaction is light-independent. The L component serves as a unique electron donor to the NB-component of the complex, and binds Mg-ATP. This Prosthecochloris aestuarii (strain DSM 271 / SK 413) protein is Light-independent protochlorophyllide reductase iron-sulfur ATP-binding protein.